Reading from the N-terminus, the 560-residue chain is Putative ABC transporter ATP-binding protein SP_0483 (560 aa).

2 ABC transporter domains span residues 6-247 (IEWK…GIRE) and 297-528 (FRLE…ANLK). Residues 40–47 (GPSGSGKS) and 329–336 (GKNGAGKS) each bind ATP.

Belongs to the ABC transporter superfamily.

The protein localises to the cell membrane. Probably part of an ABC transporter complex. Responsible for energy coupling to the transport system. The protein is Putative ABC transporter ATP-binding protein SP_0483 of Streptococcus pneumoniae serotype 4 (strain ATCC BAA-334 / TIGR4).